The chain runs to 359 residues: Aromatic amino acid aminotransferase (359 aa).

Lys223 is subject to N6-(pyridoxal phosphate)lysine.

The protein belongs to the class-II pyridoxal-phosphate-dependent aminotransferase family. In terms of assembly, homodimer. It depends on pyridoxal 5'-phosphate as a cofactor.

It carries out the reaction an aromatic L-alpha-amino acid + 2-oxoglutarate = an aromatic oxo-acid + L-glutamate. In terms of biological role, aminotransferase that catalyzes the conversion of aromatic amino acids and 2-oxoglutarate into corresponding aromatic oxo acids and L-glutamate. The polypeptide is Aromatic amino acid aminotransferase (Streptomyces avermitilis (strain ATCC 31267 / DSM 46492 / JCM 5070 / NBRC 14893 / NCIMB 12804 / NRRL 8165 / MA-4680)).